Consider the following 314-residue polypeptide: MGEGVNMEIYNESILWDEYFDALEKRNYEKALLLIDKILEVRESPDVYVRKARILRTLGENDKALEYFDKALKLKPKYILANFLKGALLVSLGKLEEAKEVFLKLCRLEKSDLPVKYVTAFILKKLGEYDYALKIIDKILKKYPKSAIAWAEKGEILYREGKLKKSLECFDNALKINPKDCQSLLYKGEILFKLGRYGEALKCLKKVFERNNKDIRALMYIIQILIYLGRLNQALEYTKKALKLNPDDPLLYLYKGIILNKLGKYNEAIKYFDKVLEINPNIPDAWNGKAIALEKLGKINEAIECYNRALDIYE.

TPR repeat units follow at residues 12-45 (ESIL…RESP), 46-78 (DVYV…KPKY), 80-112 (LANF…EKSD), 114-146 (PVKY…YPKS), 147-180 (AIAW…NPKD), 182-214 (QSLL…NNKD), 215-248 (IRAL…NPDD), 249-282 (PLLY…NPNI), and 284-313 (DAWN…LDIY).

In Methanocaldococcus jannaschii (strain ATCC 43067 / DSM 2661 / JAL-1 / JCM 10045 / NBRC 100440) (Methanococcus jannaschii), this protein is TPR repeat-containing protein MJ1345.